The primary structure comprises 185 residues: ATP synthase subunit delta, chloroplastic (185 aa).

The protein belongs to the ATPase delta chain family. As to quaternary structure, F-type ATPases have 2 components, F(1) - the catalytic core - and F(0) - the membrane proton channel. F(1) has five subunits: alpha(3), beta(3), gamma(1), delta(1), epsilon(1). CF(0) has four main subunits: a(1), b(1), b'(1) and c(10-14). The alpha and beta chains form an alternating ring which encloses part of the gamma chain. F(1) is attached to F(0) by a central stalk formed by the gamma and epsilon chains, while a peripheral stalk is formed by the delta, b and b' chains.

Its subcellular location is the plastid. The protein localises to the chloroplast thylakoid membrane. Functionally, f(1)F(0) ATP synthase produces ATP from ADP in the presence of a proton or sodium gradient. F-type ATPases consist of two structural domains, F(1) containing the extramembraneous catalytic core and F(0) containing the membrane proton channel, linked together by a central stalk and a peripheral stalk. During catalysis, ATP synthesis in the catalytic domain of F(1) is coupled via a rotary mechanism of the central stalk subunits to proton translocation. In terms of biological role, this protein is part of the stalk that links CF(0) to CF(1). It either transmits conformational changes from CF(0) to CF(1) or is implicated in proton conduction. In Gracilaria tenuistipitata var. liui (Red alga), this protein is ATP synthase subunit delta, chloroplastic.